The sequence spans 379 residues: Homoserine O-succinyltransferase (379 aa).

In terms of domain architecture, AB hydrolase-1 spans 51-360 (NAVLICHALS…DAPQGHDAFL (310 aa)). Ser-157 serves as the catalytic Nucleophile. Arg-227 lines the substrate pocket. Residues Asp-323 and His-356 contribute to the active site. Asp-357 contributes to the substrate binding site.

The protein belongs to the AB hydrolase superfamily. MetX family. In terms of assembly, homodimer.

The protein localises to the cytoplasm. It catalyses the reaction L-homoserine + succinyl-CoA = O-succinyl-L-homoserine + CoA. It functions in the pathway amino-acid biosynthesis; L-methionine biosynthesis via de novo pathway; O-succinyl-L-homoserine from L-homoserine: step 1/1. Functionally, transfers a succinyl group from succinyl-CoA to L-homoserine, forming succinyl-L-homoserine. This is Homoserine O-succinyltransferase from Ectopseudomonas mendocina (strain ymp) (Pseudomonas mendocina).